The following is a 600-amino-acid chain: PWWP domain-containing protein 2B (600 aa).

5 disordered regions span residues 81-115, 143-171, 186-350, 366-408, and 426-477; these read ETGP…PVPA, WVPQ…LILS, KSTV…LGDG, GCPR…PQGK, and DCTS…TVPP. The segment covering 104 to 115 has biased composition (pro residues); sequence EPPPPLIPPVPA. The span at 151 to 160 shows a compositional bias: basic residues; sequence TIKRTRRRLS. The segment covering 187–200 has biased composition (polar residues); that stretch reads STVSPQEASPSPLN. Ser-190 and Ser-210 each carry phosphoserine. Residues 239–252 are compositionally biased toward basic and acidic residues; the sequence is EKREEDRVAGERVP. Residue Ser-254 is modified to Phosphoserine. Positions 286 to 297 are enriched in polar residues; sequence PQQSLQNGSQDS. A compositionally biased stretch (basic and acidic residues) spans 298-309; the sequence is EVSRDVEPRGGG. The span at 328–339 shows a compositional bias: pro residues; the sequence is PVPPISDLPPPK. Residues 381–395 show a composition bias toward low complexity; the sequence is DGSSHGLEDLSSGSS. Residues 443–456 show a composition bias toward polar residues; that stretch reads SSGSEVTSPDTGDL. A Phosphoserine modification is found at Ser-457. The segment covering 457–468 has biased composition (low complexity); that stretch reads SSGDSASVPSSS. The 61-residue stretch at 500-560 folds into the PWWP domain; it reads VGDIVWGKIH…ISKLSPFSEF (61 aa).

As to quaternary structure, component of a MTA1-specific subcomplex of the NuRD complex composed of PWWP2B, MTA1 and HDAC1 but does not contain CHD4 and MBD3. Interacts with MTA1, MTA2, MTA3, HDAC1, HDAC2, RBBP4, RBBP7, BRCC3 and ZNF516. Does not interact with CHD4 and MBD3. In terms of processing, deubiquitinated by BRCC3; leading to its stabilization. In terms of tissue distribution, expressed in the brown adipose tissue.

The protein localises to the nucleus. Chromatin-binding protein that acts as an adapter between distinct nucleosome components (H3K36me3 or H2A.Z) and chromatin-modifying complexes, contributing to the regulation of the levels of histone acetylation at actively transcribed genes. Competes with CHD4 and MBD3 for interaction with MTA1 to form a NuRD subcomplex, preventing the formation of full NuRD complex (containing CHD4 and MBD3), leading to recruitment of HDACs to gene promoters resulting in turn in the deacetylation of nearby H3K27 and H2A.Z. Plays a role in facilitating transcriptional elongation through regulation of histone acetylation. Negatively regulates brown adipocyte thermogenesis by interacting with and stabilizing HDAC1 at the UCP1 gene promoter, thereby promoting histone deacetylation at the promoter leading to the repression of UCP1 expression. The protein is PWWP domain-containing protein 2B (Pwwp2b) of Mus musculus (Mouse).